The primary structure comprises 143 residues: Ribosome-binding factor A (143 aa).

The tract at residues 123 to 143 is disordered; it reads DNSLQENYKDSDKETKVEKLR.

It belongs to the RbfA family. Monomer. Binds 30S ribosomal subunits, but not 50S ribosomal subunits or 70S ribosomes.

Its subcellular location is the cytoplasm. Its function is as follows. One of several proteins that assist in the late maturation steps of the functional core of the 30S ribosomal subunit. Associates with free 30S ribosomal subunits (but not with 30S subunits that are part of 70S ribosomes or polysomes). Required for efficient processing of 16S rRNA. May interact with the 5'-terminal helix region of 16S rRNA. In Francisella philomiragia subsp. philomiragia (strain ATCC 25017 / CCUG 19701 / FSC 153 / O#319-036), this protein is Ribosome-binding factor A.